A 118-amino-acid polypeptide reads, in one-letter code: uncharacterized protein (118 aa).

Helical transmembrane passes span 5-25 (AFFN…SMVI) and 40-57 (FLTF…QHYI).

It is found in the membrane. This is an uncharacterized protein from African swine fever virus (strain Badajoz 1971 Vero-adapted) (Ba71V).